The chain runs to 535 residues: Flavonoid 3'-monooxygenase CYP75B4 (535 aa).

A helical transmembrane segment spans residues 8-28; sequence ISTSLLLTTVALSVIVCYALV. Residue Cys-469 participates in heme binding.

This sequence belongs to the cytochrome P450 family. It depends on heme as a cofactor.

The protein resides in the membrane. The catalysed reaction is a 3'-unsubstituted flavone + reduced [NADPH--hemoprotein reductase] + O2 = a 3'-hydroxyflavone + oxidized [NADPH--hemoprotein reductase] + H2O + H(+). It participates in secondary metabolite biosynthesis; flavonoid biosynthesis. Functionally, catalyzes the 3'-hydroxylation of the flavonoid B-ring to the 3',4'-hydroxylated state. Catalyzes in vitro 3'-hydroxylation of different flavonoids. Catalyzes the conversion of apigenin to luteolin, naringenin to eriodictyol, and kaempferol to quercetin. Possesses specific 5'-hydroxylase activity toward chrysoeriol (a 3'-methoxylated flavone) and is indispensable for tricin formation. Converts chrysoeriol to selgin, a precursor of tricin, suggesting that chrysoeriol, instead of tricetin, is an intermediate in tricin biosynthesis. The protein is Flavonoid 3'-monooxygenase CYP75B4 of Oryza sativa subsp. japonica (Rice).